Reading from the N-terminus, the 213-residue chain is Cytidylate kinase (213 aa).

Position 9-17 (9-17 (GPAASGKGT)) interacts with ATP.

Belongs to the cytidylate kinase family. Type 1 subfamily.

Its subcellular location is the cytoplasm. The catalysed reaction is CMP + ATP = CDP + ADP. It catalyses the reaction dCMP + ATP = dCDP + ADP. The protein is Cytidylate kinase of Caulobacter vibrioides (strain ATCC 19089 / CIP 103742 / CB 15) (Caulobacter crescentus).